A 457-amino-acid chain; its full sequence is Ribosomal protein uS12 methylthiotransferase RimO (457 aa).

Residues 6–116 enclose the MTTase N-terminal domain; the sequence is PKVGFVSLGC…VMEAVHAALP (111 aa). [4Fe-4S] cluster-binding residues include Cys15, Cys51, Cys80, Cys147, Cys151, and Cys154. One can recognise a Radical SAM core domain in the interval 133 to 370; it reads LTPRHYAYLK…MARQAEISAA (238 aa). The 69-residue stretch at 373–441 folds into the TRAM domain; that stretch reads EAKIGSVQQC…EHDLFGDALP (69 aa).

This sequence belongs to the methylthiotransferase family. RimO subfamily. Requires [4Fe-4S] cluster as cofactor.

The protein localises to the cytoplasm. The enzyme catalyses L-aspartate(89)-[ribosomal protein uS12]-hydrogen + (sulfur carrier)-SH + AH2 + 2 S-adenosyl-L-methionine = 3-methylsulfanyl-L-aspartate(89)-[ribosomal protein uS12]-hydrogen + (sulfur carrier)-H + 5'-deoxyadenosine + L-methionine + A + S-adenosyl-L-homocysteine + 2 H(+). Its function is as follows. Catalyzes the methylthiolation of an aspartic acid residue of ribosomal protein uS12. This Xanthomonas campestris pv. campestris (strain 8004) protein is Ribosomal protein uS12 methylthiotransferase RimO.